A 154-amino-acid chain; its full sequence is Cytochrome c-550 (154 aa).

The first 20 residues, 1 to 20, serve as a signal peptide directing secretion; sequence MKISIYATLAALSLALPAVA. Gln-21 carries the post-translational modification Pyrrolidone carboxylic acid. Positions 35, 38, 39, and 120 each coordinate heme c. Residues 150–154 constitute a propeptide that is removed on maturation; that stretch reads EGAAN.

Post-translationally, binds 1 heme c group covalently per subunit.

The protein is Cytochrome c-550 (cyc) of Paracoccus versutus (Thiobacillus versutus).